The chain runs to 289 residues: Nodulation protein NolT (289 aa).

Residues 1 to 33 (MFGSAHGDTTSSDTSGRRPLRLVVLPLLLALSS) form the signal peptide. C34 is lipidated: N-palmitoyl cysteine. C34 is lipidated: S-diacylglycerol cysteine. Residues 233–253 (VAVGVGAAVFAVTCYLLFIVL) form a helical membrane-spanning segment.

The protein belongs to the YscJ lipoprotein family.

It is found in the cell outer membrane. Regulates cultivar-specific nodulation of soybean. This chain is Nodulation protein NolT (nolT), found in Rhizobium fredii (Sinorhizobium fredii).